Consider the following 179-residue polypeptide: ATP-dependent protease subunit HslV (179 aa).

The active site involves threonine 7. Na(+)-binding residues include glycine 162, cysteine 165, and threonine 168.

The protein belongs to the peptidase T1B family. HslV subfamily. A double ring-shaped homohexamer of HslV is capped on each side by a ring-shaped HslU homohexamer. The assembly of the HslU/HslV complex is dependent on binding of ATP.

It is found in the cytoplasm. It catalyses the reaction ATP-dependent cleavage of peptide bonds with broad specificity.. With respect to regulation, allosterically activated by HslU binding. Functionally, protease subunit of a proteasome-like degradation complex believed to be a general protein degrading machinery. This Bordetella bronchiseptica (strain ATCC BAA-588 / NCTC 13252 / RB50) (Alcaligenes bronchisepticus) protein is ATP-dependent protease subunit HslV.